Here is a 346-residue protein sequence, read N- to C-terminus: Holliday junction branch migration complex subunit RuvB (346 aa).

Residues 1–182 (MSERLVTSNE…FGVLCSMEYY (182 aa)) are large ATPase domain (RuvB-L). Residues Leu21, Arg22, Gly63, Lys66, Thr67, Thr68, 129 to 131 (EDY), Arg172, Tyr182, and Arg219 each bind ATP. Thr67 contacts Mg(2+). Positions 183-253 (TDEQLKEIII…AAKKSLEILE (71 aa)) are small ATPAse domain (RuvB-S). A head domain (RuvB-H) region spans residues 256–346 (GEGFDRIDNK…DSKQCTLFEK (91 aa)). DNA contacts are provided by Arg311 and Arg316.

It belongs to the RuvB family. Homohexamer. Forms an RuvA(8)-RuvB(12)-Holliday junction (HJ) complex. HJ DNA is sandwiched between 2 RuvA tetramers; dsDNA enters through RuvA and exits via RuvB. An RuvB hexamer assembles on each DNA strand where it exits the tetramer. Each RuvB hexamer is contacted by two RuvA subunits (via domain III) on 2 adjacent RuvB subunits; this complex drives branch migration. In the full resolvosome a probable DNA-RuvA(4)-RuvB(12)-RuvC(2) complex forms which resolves the HJ.

It localises to the cytoplasm. The catalysed reaction is ATP + H2O = ADP + phosphate + H(+). In terms of biological role, the RuvA-RuvB-RuvC complex processes Holliday junction (HJ) DNA during genetic recombination and DNA repair, while the RuvA-RuvB complex plays an important role in the rescue of blocked DNA replication forks via replication fork reversal (RFR). RuvA specifically binds to HJ cruciform DNA, conferring on it an open structure. The RuvB hexamer acts as an ATP-dependent pump, pulling dsDNA into and through the RuvAB complex. RuvB forms 2 homohexamers on either side of HJ DNA bound by 1 or 2 RuvA tetramers; 4 subunits per hexamer contact DNA at a time. Coordinated motions by a converter formed by DNA-disengaged RuvB subunits stimulates ATP hydrolysis and nucleotide exchange. Immobilization of the converter enables RuvB to convert the ATP-contained energy into a lever motion, pulling 2 nucleotides of DNA out of the RuvA tetramer per ATP hydrolyzed, thus driving DNA branch migration. The RuvB motors rotate together with the DNA substrate, which together with the progressing nucleotide cycle form the mechanistic basis for DNA recombination by continuous HJ branch migration. Branch migration allows RuvC to scan DNA until it finds its consensus sequence, where it cleaves and resolves cruciform DNA. This is Holliday junction branch migration complex subunit RuvB from Clostridium perfringens (strain ATCC 13124 / DSM 756 / JCM 1290 / NCIMB 6125 / NCTC 8237 / Type A).